Consider the following 364-residue polypeptide: tRNA (adenine(58)-N(1))-methyltransferase catalytic subunit trm61 (364 aa).

S-adenosyl-L-methionine-binding positions include 114–116, Glu-135, Arg-140, 167–168, and Asp-186; these read SAS and DV. Residues 280-309 are disordered; the sequence is EQNLSSDAKVEDQDNDSMLGENKSSVSTET.

It belongs to the class I-like SAM-binding methyltransferase superfamily. TRM61 family. In terms of assembly, heterotetramer; composed of two copies of TRM6 and two copies of TRM61.

The protein localises to the nucleus. It catalyses the reaction adenosine(58) in tRNA + S-adenosyl-L-methionine = N(1)-methyladenosine(58) in tRNA + S-adenosyl-L-homocysteine + H(+). Its function is as follows. Catalytic subunit of tRNA (adenine-N(1)-)-methyltransferase, which catalyzes the formation of N(1)-methyladenine at position 58 (m1A58) in initiator methionyl-tRNA. The chain is tRNA (adenine(58)-N(1))-methyltransferase catalytic subunit trm61 (cpd1) from Schizosaccharomyces pombe (strain 972 / ATCC 24843) (Fission yeast).